Reading from the N-terminus, the 64-residue chain is Large ribosomal subunit protein bL33 (64 aa).

Belongs to the bacterial ribosomal protein bL33 family.

The chain is Large ribosomal subunit protein bL33 from Microcystis aeruginosa (strain NIES-843 / IAM M-2473).